The primary structure comprises 331 residues: E3 ubiquitin-protein ligase Siah2 (331 aa).

Positions 1-26 (MSRPSSAGGAAGGLGAGKAGGSKHGG) are disordered. A compositionally biased stretch (gly residues) spans 9-26 (GAAGGLGAGKAGGSKHGG). An RING-type zinc finger spans residues 89–124 (CPVCFDYVLPPILQCQAGHLVCNQCRQKLSCCPTCR). Positions 139 to 331 (VASTLPFPCK…LGINVTISMC (193 aa)) are SBD. Residues 142–202 (TLPFPCKYSS…VMPHLMHAHK (61 aa)) form an SIAH-type zinc finger. 8 residues coordinate Zn(2+): cysteine 147, cysteine 154, histidine 166, cysteine 170, cysteine 177, cysteine 184, histidine 196, and histidine 201.

It belongs to the SINA (Seven in absentia) family. Homodimer. In terms of tissue distribution, in embryos it is expressed in all blastomeres starting at the mid-blastulla. After 20 somite stage, it is expressed mainly in the posterior part. Expressed in brain, including the eye, the cranial cavity, otic vesicle, optic chiasm and in the gut.

The catalysed reaction is S-ubiquitinyl-[E2 ubiquitin-conjugating enzyme]-L-cysteine + [acceptor protein]-L-lysine = [E2 ubiquitin-conjugating enzyme]-L-cysteine + N(6)-ubiquitinyl-[acceptor protein]-L-lysine.. It participates in protein modification; protein ubiquitination. In terms of biological role, E3 ubiquitin-protein ligase that mediates ubiquitination and subsequent proteasomal degradation of target proteins. E3 ubiquitin ligases accept ubiquitin from an E2 ubiquitin-conjugating enzyme in the form of a thioester and then directly transfers the ubiquitin to targeted substrates. It probably triggers the ubiquitin-mediated degradation of different substrates. Induces cellular growth arrest by inhibiting the G2/M transition. May play a role in the regulation of the cellular clock function. This Danio rerio (Zebrafish) protein is E3 ubiquitin-protein ligase Siah2 (siah2l).